Reading from the N-terminus, the 131-residue chain is MAAAHRCLFLLLLSTCVALLLQPPLGALGAPLEPEYPGDNATPEQMAQYAAELRRYINMLTRPRYGKRDKEGTLDFLECGSPHSAVPRYGKRDKEGTLDFLECGSPHSAVPRWVFSLSCVPRCLGQENGGV.

The first 29 residues, 1-29 (MAAAHRCLFLLLLSTCVALLLQPPLGALG), serve as a signal peptide directing secretion. The residue at position 65 (tyrosine 65) is a Tyrosine amide.

Belongs to the NPY family.

The protein resides in the secreted. Hormone secreted by pancreatic cells that acts as a regulator of pancreatic and gastrointestinal functions probably by signaling through the G protein-coupled receptor NPY4R2. This is Pancreatic polypeptide prohormone (PPY) from Bos taurus (Bovine).